The sequence spans 320 residues: o-succinylbenzoate synthase (320 aa).

Lys133 acts as the Proton donor in catalysis. Asp161, Glu190, and Asp213 together coordinate Mg(2+). The Proton acceptor role is filled by Lys235.

It belongs to the mandelate racemase/muconate lactonizing enzyme family. MenC type 1 subfamily. A divalent metal cation serves as cofactor.

The catalysed reaction is (1R,6R)-6-hydroxy-2-succinyl-cyclohexa-2,4-diene-1-carboxylate = 2-succinylbenzoate + H2O. Its pathway is quinol/quinone metabolism; 1,4-dihydroxy-2-naphthoate biosynthesis; 1,4-dihydroxy-2-naphthoate from chorismate: step 4/7. It participates in quinol/quinone metabolism; menaquinone biosynthesis. Functionally, converts 2-succinyl-6-hydroxy-2,4-cyclohexadiene-1-carboxylate (SHCHC) to 2-succinylbenzoate (OSB). This is o-succinylbenzoate synthase from Escherichia coli O139:H28 (strain E24377A / ETEC).